The chain runs to 168 residues: Disulfide bond formation protein B (168 aa).

Residues Met1–Ile6 lie on the Cytoplasmic side of the membrane. A helical membrane pass occupies residues Phe7–Tyr23. The Periplasmic portion of the chain corresponds to Met24–Phe41. Cys33 and Cys36 form a disulfide bridge. Residues Gly42–Pro58 form a helical membrane-spanning segment. The Cytoplasmic segment spans residues Arg59–Val65. The helical transmembrane segment at Tyr66–Gly82 threads the bilayer. At Arg83 to Gly139 the chain is on the periplasmic side. A disulfide bond links Cys98 and Cys125. Residues Trp140–Arg158 form a helical membrane-spanning segment. Over Arg159–Ser168 the chain is Cytoplasmic.

It belongs to the DsbB family.

It localises to the cell inner membrane. Required for disulfide bond formation in some periplasmic proteins. Acts by oxidizing the DsbA protein. This chain is Disulfide bond formation protein B, found in Marinobacter nauticus (strain ATCC 700491 / DSM 11845 / VT8) (Marinobacter aquaeolei).